The primary structure comprises 338 residues: Aspartate carbamoyltransferase catalytic subunit (338 aa).

Positions 72 and 73 each coordinate carbamoyl phosphate. An L-aspartate-binding site is contributed by lysine 100. Residues arginine 122, histidine 152, and glutamine 155 each coordinate carbamoyl phosphate. L-aspartate is bound by residues arginine 186 and arginine 243. Glycine 284 and proline 285 together coordinate carbamoyl phosphate.

It belongs to the aspartate/ornithine carbamoyltransferase superfamily. ATCase family. Heterododecamer (2C3:3R2) of six catalytic PyrB chains organized as two trimers (C3), and six regulatory PyrI chains organized as three dimers (R2).

The catalysed reaction is carbamoyl phosphate + L-aspartate = N-carbamoyl-L-aspartate + phosphate + H(+). Its pathway is pyrimidine metabolism; UMP biosynthesis via de novo pathway; (S)-dihydroorotate from bicarbonate: step 2/3. Its function is as follows. Catalyzes the condensation of carbamoyl phosphate and aspartate to form carbamoyl aspartate and inorganic phosphate, the committed step in the de novo pyrimidine nucleotide biosynthesis pathway. The polypeptide is Aspartate carbamoyltransferase catalytic subunit (Acinetobacter baumannii (strain ACICU)).